The chain runs to 449 residues: NADP-specific glutamate dehydrogenase (449 aa).

The active site involves Lys-125.

This sequence belongs to the Glu/Leu/Phe/Val dehydrogenases family. As to quaternary structure, homohexamer.

It carries out the reaction L-glutamate + NADP(+) + H2O = 2-oxoglutarate + NH4(+) + NADPH + H(+). The polypeptide is NADP-specific glutamate dehydrogenase (Giardia intestinalis (Giardia lamblia)).